A 302-amino-acid chain; its full sequence is Sulfate adenylyltransferase subunit 2 (302 aa).

It belongs to the PAPS reductase family. CysD subfamily. In terms of assembly, heterodimer composed of CysD, the smaller subunit, and CysN.

The enzyme catalyses sulfate + ATP + H(+) = adenosine 5'-phosphosulfate + diphosphate. Its pathway is sulfur metabolism; hydrogen sulfide biosynthesis; sulfite from sulfate: step 1/3. Its function is as follows. With CysN forms the ATP sulfurylase (ATPS) that catalyzes the adenylation of sulfate producing adenosine 5'-phosphosulfate (APS) and diphosphate, the first enzymatic step in sulfur assimilation pathway. APS synthesis involves the formation of a high-energy phosphoric-sulfuric acid anhydride bond driven by GTP hydrolysis by CysN coupled to ATP hydrolysis by CysD. This chain is Sulfate adenylyltransferase subunit 2, found in Salmonella paratyphi A (strain AKU_12601).